The chain runs to 87 residues: U3-theraphotoxin-Hhn1a 15 (87 aa).

The N-terminal stretch at 1-24 (MVNMKASMFLTFAGLVLLLVVCYA) is a signal peptide. The propeptide occupies 25 to 52 (SESEEKEFPKEMLSSIFAVDNDFKQEER). 3 disulfides stabilise this stretch: C54–C67, C61–C72, and C66–C79.

The protein belongs to the neurotoxin 10 (Hwtx-1) family. 51 (Hntx-8) subfamily. Hntx-8 sub-subfamily. Expressed by the venom gland.

It is found in the secreted. In terms of biological role, ion channel inhibitor. In Cyriopagopus hainanus (Chinese bird spider), this protein is U3-theraphotoxin-Hhn1a 15.